A 297-amino-acid chain; its full sequence is GTPase Era (297 aa).

An Era-type G domain is found at 5 to 173 (RAGFVSFVGR…TTELMRLLPV (169 aa)). Positions 13–20 (GRPNVGKS) are G1. Residue 13 to 20 (GRPNVGKS) participates in GTP binding. Residues 39–43 (QTTRR) are G2. Positions 60 to 63 (DTPG) are G3. GTP is bound by residues 60–64 (DTPGV) and 123–126 (TKID). Positions 123-126 (TKID) are G4. Residues 152–154 (VSA) form a G5 region. In terms of domain architecture, KH type-2 spans 205–283 (VEDELPHSLA…FLSIRVKVAK (79 aa)).

It belongs to the TRAFAC class TrmE-Era-EngA-EngB-Septin-like GTPase superfamily. Era GTPase family. As to quaternary structure, monomer.

Its subcellular location is the cytoplasm. It is found in the cell membrane. In terms of biological role, an essential GTPase that binds both GDP and GTP, with rapid nucleotide exchange. Plays a role in 16S rRNA processing and 30S ribosomal subunit biogenesis and possibly also in cell cycle regulation and energy metabolism. This is GTPase Era from Leifsonia xyli subsp. xyli (strain CTCB07).